Consider the following 492-residue polypeptide: Bifunctional purine biosynthesis protein PurH (492 aa).

The MGS-like domain maps to 1–144 (MKKAILSVSN…KNFKHVTTIV (144 aa)).

It belongs to the PurH family.

It carries out the reaction (6R)-10-formyltetrahydrofolate + 5-amino-1-(5-phospho-beta-D-ribosyl)imidazole-4-carboxamide = 5-formamido-1-(5-phospho-D-ribosyl)imidazole-4-carboxamide + (6S)-5,6,7,8-tetrahydrofolate. It catalyses the reaction IMP + H2O = 5-formamido-1-(5-phospho-D-ribosyl)imidazole-4-carboxamide. The protein operates within purine metabolism; IMP biosynthesis via de novo pathway; 5-formamido-1-(5-phospho-D-ribosyl)imidazole-4-carboxamide from 5-amino-1-(5-phospho-D-ribosyl)imidazole-4-carboxamide (10-formyl THF route): step 1/1. It participates in purine metabolism; IMP biosynthesis via de novo pathway; IMP from 5-formamido-1-(5-phospho-D-ribosyl)imidazole-4-carboxamide: step 1/1. The polypeptide is Bifunctional purine biosynthesis protein PurH (Staphylococcus haemolyticus (strain JCSC1435)).